We begin with the raw amino-acid sequence, 448 residues long: Protein chibby homolog 2 (448 aa).

8 positions are modified to phosphoserine: Ser41, Ser86, Ser89, Ser97, Ser124, Ser144, Ser148, and Ser150. Residues 164–198 (KECMLQEENKSLREENKALREENRMLSKENKILQV) are a coiled coil. 2 positions are modified to phosphoserine: Ser212 and Ser225. Positions 242-267 (KEDSTLQLLREENRALQQLLEQKQAY) form a coiled coil. The disordered stretch occupies residues 270 to 323 (QAEDTAAPAEESKPAPSPHEEPCSPGLLQDQGSGLSSRFEEPKGPPARQEDSKE). Composition is skewed to basic and acidic residues over residues 279 to 291 (EESK…HEEP) and 307 to 323 (RFEE…DSKE). Phosphoserine is present on residues Ser335 and Ser338. Residues 356 to 414 (LQLLREMRQALQALLKENRLLQEENRTLQVLRAEHRGFQEENKALWENNKLKLQQKLVI) adopt a coiled-coil conformation.

The protein belongs to the chibby family. SPERT subfamily. As to quaternary structure, homodimer. Binds to NEK1. In terms of tissue distribution, testis-specific.

The polypeptide is Protein chibby homolog 2 (Homo sapiens (Human)).